Here is a 485-residue protein sequence, read N- to C-terminus: MDEILKTRVKDLCEKIRSGQIKSIEIVKACFKRIKETDPKVKAFLKLNEERSLKQAAQSDDKIKTGAECGSLEGVPIGIKDNIMIKGESMTSASKYLENYISPYDAAVIEKLKEAGVIFVGRTNMDEFAMGGSTETSVYQKTANPWNIDYIPGGSSGGSAAAVSSGMVPFALGSDTGGSIRQPAGFCGIVGYKPSYGLISRYGACALASSFDQIGVFSKTVKDASLLTSFIAVGDYRDPVCETGEQTNYAHGIYNPDILKTVRIGIPKQLSNYKADEEITKYFGDAVNKLKLEGAATVEIDVPAYKYVPALYEVIMCAEVSANIATFDGIRYGYRSSNGRNLNDEYAKSRAESLGYEVKKRILFGTYVLGAKNYYRCYHQAQRVRTLLINQITDAYKKCDFIFSPATLQMPVKFGEKLSEECDIFLTAANLAGLPGITVPCTFTSSGMPMGVHFMGSRFSDAKLFQIADAFERISGFDINKYPNL.

Catalysis depends on charge relay system residues Lys-80 and Ser-155. Ser-179 serves as the catalytic Acyl-ester intermediate.

Belongs to the amidase family. GatA subfamily. In terms of assembly, heterotrimer of A, B and C subunits.

It catalyses the reaction L-glutamyl-tRNA(Gln) + L-glutamine + ATP + H2O = L-glutaminyl-tRNA(Gln) + L-glutamate + ADP + phosphate + H(+). Allows the formation of correctly charged Gln-tRNA(Gln) through the transamidation of misacylated Glu-tRNA(Gln) in organisms which lack glutaminyl-tRNA synthetase. The reaction takes place in the presence of glutamine and ATP through an activated gamma-phospho-Glu-tRNA(Gln). The sequence is that of Glutamyl-tRNA(Gln) amidotransferase subunit A from Endomicrobium trichonymphae.